We begin with the raw amino-acid sequence, 241 residues long: 2-C-methyl-D-erythritol 4-phosphate cytidylyltransferase (241 aa).

This sequence belongs to the IspD/TarI cytidylyltransferase family. IspD subfamily. As to quaternary structure, homodimer.

It catalyses the reaction 2-C-methyl-D-erythritol 4-phosphate + CTP + H(+) = 4-CDP-2-C-methyl-D-erythritol + diphosphate. Its pathway is isoprenoid biosynthesis; isopentenyl diphosphate biosynthesis via DXP pathway; isopentenyl diphosphate from 1-deoxy-D-xylulose 5-phosphate: step 2/6. Catalyzes the formation of 4-diphosphocytidyl-2-C-methyl-D-erythritol from CTP and 2-C-methyl-D-erythritol 4-phosphate (MEP). This chain is 2-C-methyl-D-erythritol 4-phosphate cytidylyltransferase, found in Yersinia pestis.